We begin with the raw amino-acid sequence, 441 residues long: Mitochondrial inner membrane protein OXA1L (441 aa).

Residues Met1–Glu113 lie on the Mitochondrial intermembrane side of the membrane. Residues Leu114–Val134 traverse the membrane as a helical segment. The Mitochondrial matrix segment spans residues Asn135–Pro139. A helical transmembrane segment spans residues Trp140–Val160. At Lys161–Lys212 the chain is on the mitochondrial intermembrane side. The helical transmembrane segment at Leu213 to Ala233 threads the bilayer. Over Leu234–Asp260 the chain is Mitochondrial matrix. The chain crosses the membrane as a helical span at residues Pro261–Ala281. Residues Glu282–Arg298 are Mitochondrial intermembrane-facing. Residues Leu299–Trp319 traverse the membrane as a helical segment. Topologically, residues Leu320–Gly441 are mitochondrial matrix. Position 364 is a phosphoserine (Ser364). Thr400 is subject to Phosphothreonine. The tract at residues Pro405–Gly441 is disordered. A compositionally biased stretch (low complexity) spans Pro418–Lys429.

The protein belongs to the OXA1/ALB3/YidC family. As to quaternary structure, monomer; predominantly monomeric at low salt concentrations. Homooligomer; predominantly homooligomeric at high salt concentrations. Associates with the mitochondrial ribosome. Associates preferentially as a dimer with the large ribosomal subunit 39S of the mitochondrial ribosome. Interacts with OXA1L; promoting cotranslational quality control in mitochondria.

Its subcellular location is the mitochondrion inner membrane. Its function is as follows. Mitochondrial membrane insertase that mediates the cotranslational insertion of integral membrane proteins into the mitochondrial inner membrane. Essential for the activity and assembly of cytochrome oxidase. Required for the correct biogenesis of ATP synthase and complex I in mitochondria. This chain is Mitochondrial inner membrane protein OXA1L (OXA1L), found in Bos taurus (Bovine).